A 350-amino-acid polypeptide reads, in one-letter code: MVIATVAGFMLGGAAHAEEKLKVGFIYIGPPGDFGWTYQHDQARKELVEALGDKVETTFLENVAEGADAERSIKRIARAGNKLIFTTSFGYMDPTVKVAKKFPDVKFEHATGYKTADNMSAYNARFYEGRYVQGVIAAKMSKKGIAGYIGSVPVPEVVQGINSFMLGAQSVNPDFRVKVIWVNSWFDPGKEADAAKALIDQGVDIITQHTDSTAAIQVAHDRGIKAFGQASDMIKFAPDTQLTAVVDEWGPYYIDRAKAVLDGTWKSQNIWWGMKEGLVKMAPFTNMPDDVKKLAEETEARIKSGELNPFTGPIKKQDGSEWLKAGEKADDQTLLGMNFYVAGVDDKLPQ.

A signal peptide spans 1-17; the sequence is MVIATVAGFMLGGAAHA. Residues tryptophan 36, tryptophan 185, and aspartate 211 each coordinate adenine.

Belongs to the BMP lipoprotein family.

Its function is as follows. Binds adenine and probably also other purines, such as guanine. May play a role in adenine and guanine uptake. May be part of an ABC-type uptake system for adenine and similar ligands. The protein is Purine-binding protein BAB2_0673 of Brucella abortus (strain 2308).